The primary structure comprises 255 residues: Small ribosomal subunit protein uS2 (255 aa).

The segment at 233-255 (DFVAEEAASEESLEELAEIVEGK) is disordered.

The protein belongs to the universal ribosomal protein uS2 family.

The chain is Small ribosomal subunit protein uS2 from Lactococcus lactis subsp. cremoris (strain SK11).